The primary structure comprises 386 residues: Methionine aminopeptidase 1 (386 aa).

A C6H2-type zinc finger spans residues 6–59 (TRECETEGCHSEAKLQCPTCIKLGIQGSYFCSQECFKGSWATHKLLHKKAKEDK). Zn(2+) is bound by residues Cys9, Cys14, Cys22, Cys25, Cys36, Cys40, His48, and His52. Residue His202 participates in a protein binding. Zn(2+) contacts are provided by Asp219, Asp230, and His293. His300 lines the a protein pocket. The Zn(2+) site is built by Glu326 and Glu357.

This sequence belongs to the peptidase M24A family. Methionine aminopeptidase type 1 subfamily. Associates with the 60S ribosomal subunit of the 80S translational complex. Requires Zn(2+) as cofactor. It depends on Co(2+) as a cofactor. The cofactor is Mn(2+). Fe(2+) serves as cofactor.

It localises to the cytoplasm. The enzyme catalyses Release of N-terminal amino acids, preferentially methionine, from peptides and arylamides.. In terms of biological role, cotranslationally removes the N-terminal methionine from nascent proteins. The N-terminal methionine is often cleaved when the second residue in the primary sequence is small and uncharged (Met-Ala-, Cys, Gly, Pro, Ser, Thr, or Val). This chain is Methionine aminopeptidase 1 (metap1), found in Danio rerio (Zebrafish).